We begin with the raw amino-acid sequence, 119 residues long: Divalent-cation tolerance protein CutA (119 aa).

Positions 23, 90, and 91 each coordinate Cu cation.

It belongs to the CutA family. In terms of assembly, homotrimer. The cofactor is Cu cation.

The protein resides in the cytoplasm. Its function is as follows. Involved in resistance toward heavy metals. The protein is Divalent-cation tolerance protein CutA of Yersinia pseudotuberculosis serotype O:1b (strain IP 31758).